Here is a 504-residue protein sequence, read N- to C-terminus: Probable protein phosphatase 2C 18 (504 aa).

Residues 1 to 49 are disordered; that stretch reads MGLCYSVDRTTGKEPGEASSTATTAETVEERSGSGRWRRPRDLKGGGDI. The segment covering 17-26 has biased composition (low complexity); sequence EASSTATTAE. The PPM-type phosphatase domain occupies 67-399; that stretch reads IACLYTQQGK…DDCTVVCLFL (333 aa). Mn(2+) is bound by residues D103, G104, D344, and D390. The tract at residues 410–435 is disordered; sequence TNVKKDSPKEESIESVTNSTSKEEDE. Over residues 412–421 the composition is skewed to basic and acidic residues; that stretch reads VKKDSPKEES.

This sequence belongs to the PP2C family. It depends on Mg(2+) as a cofactor. Mn(2+) serves as cofactor.

The enzyme catalyses O-phospho-L-seryl-[protein] + H2O = L-seryl-[protein] + phosphate. It carries out the reaction O-phospho-L-threonyl-[protein] + H2O = L-threonyl-[protein] + phosphate. The polypeptide is Probable protein phosphatase 2C 18 (Arabidopsis thaliana (Mouse-ear cress)).